Here is a 342-residue protein sequence, read N- to C-terminus: Lumican (342 aa).

The N-terminal stretch at 1–18 (MNLGVFPLLLALIGGASS) is a signal peptide. Sulfotyrosine occurs at positions 20, 23, and 34. The 39-residue stretch at 32-70 (ALYGRSSPNCAPECNCPESYPSAMYCDELKLKSVPMVPP) folds into the LRRNT domain. LRR repeat units lie at residues 71 to 92 (GIKY…AFEN), 95 to 118 (DLQW…VFSK), 121 to 141 (QLKK…PLPK), 142 to 163 (SLVD…DGLV), 164 to 185 (NLTF…AALK), 189 to 209 (SLEY…GLPV), 210 to 231 (SLLT…YFKR), and 234 to 254 (ALQY…PGNS). A glycan (N-linked (GlcNAc...) (keratan sulfate) asparagine) is linked at Asn-92. Asn-131 is a glycosylation site (N-linked (GlcNAc...) (keratan sulfate) asparagine). Residue Asn-164 is glycosylated (N-linked (GlcNAc...) (keratan sulfate) asparagine). Asn-256 carries an N-linked (GlcNAc...) (keratan sulfate) asparagine glycan. LRR repeat units follow at residues 259–280 (SLLE…NENL) and 281–300 (ENYY…SFCK). The cysteines at positions 299 and 332 are disulfide-linked. Ser-308 bears the Phosphoserine mark. One copy of the LRR 11 repeat lies at 309–330 (KIKHLRLDGNHITQTSLPPDMY).

The protein belongs to the small leucine-rich proteoglycan (SLRP) family. SLRP class II subfamily. In terms of assembly, binds to laminin. Sulfated on tyrosine residue(s). Post-translationally, contains keratan sulfate. In terms of tissue distribution, cornea and other tissues.

Its subcellular location is the secreted. The protein localises to the extracellular space. It is found in the extracellular matrix. This chain is Lumican (LUM), found in Bos taurus (Bovine).